Here is a 498-residue protein sequence, read N- to C-terminus: ATP synthase subunit beta, chloroplastic (498 aa).

ATP is bound at residue 172-179 (GGAGVGKT).

This sequence belongs to the ATPase alpha/beta chains family. F-type ATPases have 2 components, CF(1) - the catalytic core - and CF(0) - the membrane proton channel. CF(1) has five subunits: alpha(3), beta(3), gamma(1), delta(1), epsilon(1). CF(0) has four main subunits: a(1), b(1), b'(1) and c(9-12).

It is found in the plastid. The protein resides in the chloroplast thylakoid membrane. It carries out the reaction ATP + H2O + 4 H(+)(in) = ADP + phosphate + 5 H(+)(out). Its function is as follows. Produces ATP from ADP in the presence of a proton gradient across the membrane. The catalytic sites are hosted primarily by the beta subunits. This is ATP synthase subunit beta, chloroplastic from Gossypium hirsutum (Upland cotton).